Reading from the N-terminus, the 777-residue chain is MAAESTATAAITAELVSADKIEEDAPAPSTSADKVESLDVDSEAKKLLGLGQKHLVMGDIPAAVNAFQEAASLLGKKYGETANECGEAFFFYGKSLLELARMENGVLGNALEGVHVEEEEGEKTEEESLVENNDNIDEEAREELREQVYDAMGEKEAQKTEDKSLVKPEMDKEQETEMEKGGREDMDIGEPAEELQEKVKSAPDQLTETTEEGKGAAAPEGLSEAEVTSKKPDQEIPGAEEGKSVSETDVQEECREKGGQGEVIVSIEEKPKEASKEQPVVTLEKQGTPVEIEAVKPVDMGGDEPKEQVAASESERGKAILEQLVGQELPSAEESPEVTTQAADASAAEAGSEVSEKPGGQDTVLPQDGAVNGLSAAGDHASTKPQTNAEGLIGTKDGSALEKVRAELVPSQETKLSVEESEAAGDGVETEVAQGATEQSPEDKVKIAANEEAQDKEEQMKEGEETEGSEEEDKENDKAEETLNDSALENKSLQENEEEEIGNLELAWDMLDLAKIIFKRQDTKEAQLYAAQAHLKLGEVSVESENYLQAVEEFQACLNLQEQYLEAHDRLLAETHYQLGLAYGYNSQYDEAVAQFSKSIEVIEKRMAVLNEQMKEAEGSPTEYEKEIEELKELLPEIREKIEDAKESQRSGNVAELALKATLVESSTSGFTPSGGSSSVSMIASRKPTDGASSSNCVTDISHLVRKKRKPEEESPRKDDAKKAKQEPEVNGGSGDTISTGTEVAENMEEEAENKAESRAAVEGTVEAGATVESTAC.

An N-acetylalanine modification is found at Ala-2. The residue at position 34 (Lys-34) is an N6-acetyllysine. One copy of the TPR 1 repeat lies at 44–77; sequence AKKLLGLGQKHLVMGDIPAAVNAFQEAASLLGKK. Residues 117-128 form a histone-binding region; it reads EEEEGEKTEEES. A Phosphothreonine modification is found at Thr-124. Position 128 is a phosphoserine (Ser-128). Composition is skewed to basic and acidic residues over residues 152-186, 227-259, and 267-276; these read MGEK…REDM, VTSK…EKGG, and IEEKPKEASK. Positions 152–496 are disordered; that stretch reads MGEKEAQKTE…ALENKSLQEN (345 aa). Positions 211–244 are histone-binding; it reads EEGKGAAAPEGLSEAEVTSKKPDQEIPGAEEGKS. The residue at position 243 (Lys-243) is an N6-acetyllysine. Ser-244 bears the Phosphoserine mark. Lys-285 bears the N6-acetyllysine mark. A compositionally biased stretch (basic and acidic residues) spans 303-319; it reads DEPKEQVAASESERGKA. Ser-312 carries the phosphoserine modification. Over residues 342-353 the composition is skewed to low complexity; the sequence is AADASAAEAGSE. A phosphoserine mark is found at Ser-399, Ser-411, and Ser-440. The interval 458–501 is histone-binding; the sequence is EQMKEGEETEGSEEEDKENDKAEETLNDSALENKSLQENEEEEI. The segment covering 464–474 has biased composition (acidic residues); the sequence is EETEGSEEEDK. Thr-466 carries the phosphothreonine modification. A phosphoserine mark is found at Ser-469, Ser-486, and Ser-492. The span at 484 to 493 shows a compositional bias: polar residues; the sequence is NDSALENKSL. TPR repeat units lie at residues 531 to 564 and 573 to 606; these read AQAH…QEQY and AETH…IEKR. The stretch at 593-648 forms a coiled coil; that stretch reads VAQFSKSIEVIEKRMAVLNEQMKEAEGSPTEYEKEIEELKELLPEIREKIEDAKES. Ser-651 is subject to Phosphoserine. Residues 667 to 681 show a composition bias toward low complexity; it reads STSGFTPSGGSSSVS. The segment at 667-777 is disordered; sequence STSGFTPSGG…AGATVESTAC (111 aa). A Phosphothreonine modification is found at Thr-672. 2 positions are modified to phosphoserine: Ser-694 and Ser-695. Positions 705 to 711 match the Nuclear localization signal motif; sequence VRKKRKP. The span at 710-728 shows a compositional bias: basic and acidic residues; that stretch reads KPEEESPRKDDAKKAKQEP. Ser-715 is modified (phosphoserine). Lys-725 is covalently cross-linked (Glycyl lysine isopeptide (Lys-Gly) (interchain with G-Cter in SUMO1)). Residue Ser-734 is modified to Phosphoserine.

The protein belongs to the NASP family. In terms of assembly, binds to linker H1 histones. Interacts with histones H2A, H2B, H3 and H4. Interacts with histone H3.3. Interacts with histones H3 and H4; NASP is a histone chaperone that stabilizes and maintains a soluble pool of histone H3-H4 dimers. Interacts with ASF1A and ASF1B; the interaction is probably indirect and mediated by H3-H4. Also binds to HSP90 in the cytoplasm. This interaction stimulates binding of NASP to H1-6/H1T.

The protein localises to the cytoplasm. It localises to the nucleus. In terms of biological role, component of the histone chaperone network. Binds and stabilizes histone H3-H4 not bound to chromatin to maintain a soluble reservoir and modulate degradation by chaperone-mediated autophagy. Required for DNA replication, normal cell cycle progression and cell proliferation. Forms a cytoplasmic complex with HSP90 and H1 linker histones and stimulates HSP90 ATPase activity. NASP and H1 histone are subsequently released from the complex and translocate to the nucleus where the histone is released for binding to DNA. The protein is Nuclear autoantigenic sperm protein of Bos taurus (Bovine).